The primary structure comprises 764 residues: Dehydrocurvularin biosynthesis regulator (764 aa).

The segment at residues 28–59 (CWECKRRKMKCIFDPRITSTSCNGCRQRGSPC) is a DNA-binding region (zn(2)-C6 fungal-type). 3 disordered regions span residues 73 to 94 (HGAN…SDDA), 112 to 136 (YRYL…ASTC), and 633 to 672 (FPTS…PALS). Positions 77–88 (DSASLDASTPIA) are enriched in polar residues. The span at 663-672 (HPNTPSPALS) shows a compositional bias: polar residues.

Its subcellular location is the nucleus. Transcription factor involved in regulation of the dehydrocurvularin biosynthesis gene cluster. The chain is Dehydrocurvularin biosynthesis regulator from Alternaria cinerariae.